The following is a 235-amino-acid chain: 5'-methylthioadenosine/S-adenosylhomocysteine nucleosidase (235 aa).

E13 (proton acceptor) is an active-site residue. Residues G79, M154, and 175–176 each bind substrate; that span reads ME. The Proton donor role is filled by D199.

The protein belongs to the PNP/UDP phosphorylase family. MtnN subfamily.

The enzyme catalyses S-adenosyl-L-homocysteine + H2O = S-(5-deoxy-D-ribos-5-yl)-L-homocysteine + adenine. It carries out the reaction S-methyl-5'-thioadenosine + H2O = 5-(methylsulfanyl)-D-ribose + adenine. The catalysed reaction is 5'-deoxyadenosine + H2O = 5-deoxy-D-ribose + adenine. Its pathway is amino-acid biosynthesis; L-methionine biosynthesis via salvage pathway; S-methyl-5-thio-alpha-D-ribose 1-phosphate from S-methyl-5'-thioadenosine (hydrolase route): step 1/2. Functionally, catalyzes the irreversible cleavage of the glycosidic bond in both 5'-methylthioadenosine (MTA) and S-adenosylhomocysteine (SAH/AdoHcy) to adenine and the corresponding thioribose, 5'-methylthioribose and S-ribosylhomocysteine, respectively. Also cleaves 5'-deoxyadenosine, a toxic by-product of radical S-adenosylmethionine (SAM) enzymes, into 5-deoxyribose and adenine. This chain is 5'-methylthioadenosine/S-adenosylhomocysteine nucleosidase, found in Chromohalobacter salexigens (strain ATCC BAA-138 / DSM 3043 / CIP 106854 / NCIMB 13768 / 1H11).